The following is a 318-amino-acid chain: Acetyl-coenzyme A carboxylase carboxyl transferase subunit beta (318 aa).

The CoA carboxyltransferase N-terminal domain maps to 25-294; the sequence is LWSKCSECGT…AVKGELPAPA (270 aa). The Zn(2+) site is built by cysteine 29, cysteine 32, cysteine 48, and cysteine 51. The C4-type zinc-finger motif lies at 29–51; that stretch reads CSECGTMLFHRELSDNLNVCTNC. The segment at 286-318 is disordered; it reads VKGELPAPAPLESDAETALASDTDPNGAPPSKD.

This sequence belongs to the AccD/PCCB family. In terms of assembly, acetyl-CoA carboxylase is a heterohexamer composed of biotin carboxyl carrier protein (AccB), biotin carboxylase (AccC) and two subunits each of ACCase subunit alpha (AccA) and ACCase subunit beta (AccD). Zn(2+) is required as a cofactor.

The protein localises to the cytoplasm. It carries out the reaction N(6)-carboxybiotinyl-L-lysyl-[protein] + acetyl-CoA = N(6)-biotinyl-L-lysyl-[protein] + malonyl-CoA. It functions in the pathway lipid metabolism; malonyl-CoA biosynthesis; malonyl-CoA from acetyl-CoA: step 1/1. Component of the acetyl coenzyme A carboxylase (ACC) complex. Biotin carboxylase (BC) catalyzes the carboxylation of biotin on its carrier protein (BCCP) and then the CO(2) group is transferred by the transcarboxylase to acetyl-CoA to form malonyl-CoA. This Jannaschia sp. (strain CCS1) protein is Acetyl-coenzyme A carboxylase carboxyl transferase subunit beta.